Here is a 177-residue protein sequence, read N- to C-terminus: Large ribosomal subunit protein uL6 (177 aa).

This sequence belongs to the universal ribosomal protein uL6 family. As to quaternary structure, part of the 50S ribosomal subunit.

In terms of biological role, this protein binds to the 23S rRNA, and is important in its secondary structure. It is located near the subunit interface in the base of the L7/L12 stalk, and near the tRNA binding site of the peptidyltransferase center. The sequence is that of Large ribosomal subunit protein uL6 from Micrococcus luteus (strain ATCC 4698 / DSM 20030 / JCM 1464 / CCM 169 / CCUG 5858 / IAM 1056 / NBRC 3333 / NCIMB 9278 / NCTC 2665 / VKM Ac-2230) (Micrococcus lysodeikticus).